Reading from the N-terminus, the 279-residue chain is Acyl-[acyl-carrier-protein]--UDP-N-acetylglucosamine O-acyltransferase (279 aa).

Residues 260-279 (AAKEAFQEESVDKEGALVES) form a disordered region.

This sequence belongs to the transferase hexapeptide repeat family. LpxA subfamily. As to quaternary structure, homotrimer.

It localises to the cytoplasm. It catalyses the reaction a (3R)-hydroxyacyl-[ACP] + UDP-N-acetyl-alpha-D-glucosamine = a UDP-3-O-[(3R)-3-hydroxyacyl]-N-acetyl-alpha-D-glucosamine + holo-[ACP]. The protein operates within glycolipid biosynthesis; lipid IV(A) biosynthesis; lipid IV(A) from (3R)-3-hydroxytetradecanoyl-[acyl-carrier-protein] and UDP-N-acetyl-alpha-D-glucosamine: step 1/6. Involved in the biosynthesis of lipid A, a phosphorylated glycolipid that anchors the lipopolysaccharide to the outer membrane of the cell. This Chlamydia abortus (strain DSM 27085 / S26/3) (Chlamydophila abortus) protein is Acyl-[acyl-carrier-protein]--UDP-N-acetylglucosamine O-acyltransferase.